The primary structure comprises 327 residues: Methionyl-tRNA formyltransferase (327 aa).

118 to 121 (SLLP) contributes to the (6S)-5,6,7,8-tetrahydrofolate binding site.

The protein belongs to the Fmt family.

It carries out the reaction L-methionyl-tRNA(fMet) + (6R)-10-formyltetrahydrofolate = N-formyl-L-methionyl-tRNA(fMet) + (6S)-5,6,7,8-tetrahydrofolate + H(+). Its function is as follows. Attaches a formyl group to the free amino group of methionyl-tRNA(fMet). The formyl group appears to play a dual role in the initiator identity of N-formylmethionyl-tRNA by promoting its recognition by IF2 and preventing the misappropriation of this tRNA by the elongation apparatus. In Corynebacterium jeikeium (strain K411), this protein is Methionyl-tRNA formyltransferase.